Reading from the N-terminus, the 857-residue chain is DNA mismatch repair protein MutS (857 aa).

608-615 (GPNMSGKS) provides a ligand contact to ATP.

This sequence belongs to the DNA mismatch repair MutS family.

Functionally, this protein is involved in the repair of mismatches in DNA. It is possible that it carries out the mismatch recognition step. This protein has a weak ATPase activity. This Lactobacillus johnsonii (strain CNCM I-12250 / La1 / NCC 533) protein is DNA mismatch repair protein MutS.